We begin with the raw amino-acid sequence, 210 residues long: Redox-sensing transcriptional repressor Rex (210 aa).

Residues 16–55 (IYMRTLQELLEDDVDVISSERLAKQCGVNPAQIRKDLAYF) constitute a DNA-binding region (H-T-H motif). An NAD(+)-binding site is contributed by 90–95 (GLGNLG).

The protein belongs to the transcriptional regulatory Rex family. As to quaternary structure, homodimer.

It localises to the cytoplasm. Modulates transcription in response to changes in cellular NADH/NAD(+) redox state. The protein is Redox-sensing transcriptional repressor Rex of Syntrophobacter fumaroxidans (strain DSM 10017 / MPOB).